A 441-amino-acid chain; its full sequence is Zinc finger and BTB domain-containing protein 8A (441 aa).

The 69-residue stretch at 24–92 (CDCSILVEGK…VYSGKLSLTG (69 aa)) folds into the BTB domain. Composition is skewed to polar residues over residues 143 to 170 (NGVERSSFYSGGWQEGSSSPRSHLSPEQ) and 178 to 196 (KSWNKYNYHPASQKNTQQP). Residues 143–251 (NGVERSSFYS…QSEEQAQIDA (109 aa)) form a disordered region. Ser161 and Ser167 each carry phosphoserine. Glycyl lysine isopeptide (Lys-Gly) (interchain with G-Cter in SUMO2) cross-links involve residues Lys178, Lys182, Lys191, and Lys199. The segment covering 198-208 (AKHEPRKESIK) has biased composition (basic and acidic residues). A compositionally biased stretch (low complexity) spans 234-243 (SDSSSHVSQS). 2 consecutive C2H2-type zinc fingers follow at residues 282-304 (FKCPYCTHVVKRKADLKRHLRCH) and 310-333 (YPCQACGKRFSRLDHLSSHFRTIH). Lys437 participates in a covalent cross-link: Glycyl lysine isopeptide (Lys-Gly) (interchain with G-Cter in SUMO2).

It is found in the nucleus. Its function is as follows. May be involved in transcriptional regulation. In Homo sapiens (Human), this protein is Zinc finger and BTB domain-containing protein 8A (ZBTB8A).